The chain runs to 1320 residues: MSSNDSSLMAGIIYYSQEKYFHHVQQAAAVGLEKFSNDPVLKFFKAYGVLKEEHIQDAISDLESIRHHPDVSLCSTMALIYAHKRCEIIDREAIQELEYSLKEIRKTVSGTALYYAGLFLWLIGRHDKAKEYIDRMLKISRGFREAYVLRGWVDLTSDKPHTAKKAIEYLEQGIQDTKDVLGLMGKAMYFMMQQNYSEALEVVNQITVTSGSFLPALVLKMQLFLARQDWEQTVEMGHRILEKDESNIDACQILTVHELAREGNMTTVSSLKTQKATNHVRNLIKALETREPENPSLHLKKIIVVSRLCGSHQVILGLVCSFIERTFMATPSYVHVATELGYLFILKNQVKEALLWYSEAMKLDKDGMAGLTGIILCHILEGHLEEAEYRLEFLKEVQKSLGKSEVLIFLQALLMSRKHKGEEETTALLKEAVELHFSSMQGIPLGSEYFEKLDPYFLVCIAKEYLLFCPKQPRLPGQIVSPLLKQVAVILNPVVKAAPALIDPLYLMAQVRYYSELENAQSILQRCLELDPASVDAHLLMCQIYLAQGNFGMCFHCLELGVSHNFQVRDHPLYHLIKARALNKAGDYPEAIKTLKMVIKLPALKKEEGRKFLRPSVQPSQRASILLELVEALRLNGELHEATKVMQDTINEFGGTPEENRITIANVDLVLSKGNVDVALNMLRNILPKQSCYMEAREKMANIYLQTLRDRRLYIRCYRELCEHLPGPHTSLLLGDALMSILEPEKALEVYDEAYRQNPHDASLASRIGHAYVKAHQYTEAIEYYEAAQKINGQDFLCCDLGKLLLKLKKVNKAEKVLKQALEHDIVQDIPSMMNDVKCLLLLAKVYKSHKKEAVIETLNKALDLQSRILKRVPLEQPEMIPSQKQLAASICIQFAEHYLAEKEYDKAVQSYKDVFSYLPTDNKVMLELAQLYLLQGHLDLCEQHCAILLQTEQNHETASVLMADLMFRKQKHEAAINLYHQVLEKAPDNFLVLHKLIDLLRRSGKLEDIPAFFELAKKVSSRVPLEPGFNYCRGIYCWHIGQPNEALKFLNKARKDSTWGQSAIYHMVQICLNPDNEVVGGEAFENQGAESNYMEKKELEQQGVSTAEKLLREFYPHSDSSQTQLRLLQGLCRLATREKANMEAALGSFIQIAQAEKDSVPALLALAQAYVFLKQIPKARMQLKRLAKTPWVLSEAEDLEKSWLLLADIYCQGSKFDLALELLRRCVQYNKSCYKAYEYMGFIMEKEQSYKDAVTNYKLAWKYSHHANPAIGFKLAFNYLKDKKFVEAIEICNDVLREHPDYPKIREEILEKARRSLRP.

TPR repeat units lie at residues 4-38, 110-143, 146-180, 181-213, 215-247, 334-367, 502-534, 572-605, 728-761, 762-795, 797-828, 837-869, 889-922, 924-956, 957-990, 1028-1061, 1201-1234, 1236-1268, and 1270-1303; these read NDSS…FSND, GTAL…SRGF, AYVL…TKDV, LGLM…SGSF, PALV…DESN, VHVA…DKDG, IDPL…DPAS, PLYH…PALK, PHTS…NPHD, ASLA…NGQD, LCCD…DIVQ, VKCL…QSRI, ASIC…LPTD, KVML…EQNH, ETAS…APDN, PGFN…STWG, EKSW…NKSC, KAYE…SHHA, and PAIG…HPDY.

Belongs to the TTC21 family. Interacts with IFT20. Interacts with IFT52. Interacts with IFT140. Interacts with CEP78; regulating IFT20 stability and localization. As to expression, strongly expressed in testis.

In terms of biological role, intraflagellar transport (IFT)-associated protein required for spermatogenesis. Required for sperm flagellar formation and intraflagellar transport. In Homo sapiens (Human), this protein is Tetratricopeptide repeat protein 21A.